Here is a 339-residue protein sequence, read N- to C-terminus: Uroporphyrinogen decarboxylase (339 aa).

Substrate-binding positions include 23 to 27 (RQAGR), D72, Y147, S202, and H315.

This sequence belongs to the uroporphyrinogen decarboxylase family. Homodimer.

It localises to the cytoplasm. The enzyme catalyses uroporphyrinogen III + 4 H(+) = coproporphyrinogen III + 4 CO2. It participates in porphyrin-containing compound metabolism; protoporphyrin-IX biosynthesis; coproporphyrinogen-III from 5-aminolevulinate: step 4/4. Its function is as follows. Catalyzes the decarboxylation of four acetate groups of uroporphyrinogen-III to yield coproporphyrinogen-III. In Desulfotalea psychrophila (strain LSv54 / DSM 12343), this protein is Uroporphyrinogen decarboxylase.